The following is a 122-amino-acid chain: MKKYNKSIGFYGEDLSAKFLEKDGYSILEKNFNCSSGEIDIIAIKDEIISFIEVKSRFSDSFGKPKESVTCSKQGRIINAAKYYLHIKKLYNYYIRFDVIEINFHIDSSKYELSFLKDAFRV.

The protein belongs to the UPF0102 family.

This chain is UPF0102 protein CPR_1677, found in Clostridium perfringens (strain SM101 / Type A).